Consider the following 1037-residue polypeptide: Mediator of RNA polymerase II transcription subunit 14 (1037 aa).

It belongs to the Mediator complex subunit 14 family. Component of the Mediator complex.

The protein resides in the nucleus. In terms of biological role, component of the Mediator complex, a coactivator involved in the regulated transcription of nearly all RNA polymerase II-dependent genes. Mediator functions as a bridge to convey information from gene-specific regulatory proteins to the basal RNA polymerase II transcription machinery. Mediator is recruited to promoters by direct interactions with regulatory proteins and serves as a scaffold for the assembly of a functional preinitiation complex with RNA polymerase II and the general transcription factors. This is Mediator of RNA polymerase II transcription subunit 14 (RGR1) from Candida glabrata (strain ATCC 2001 / BCRC 20586 / JCM 3761 / NBRC 0622 / NRRL Y-65 / CBS 138) (Yeast).